The chain runs to 350 residues: uncharacterized protein (350 aa).

The signal sequence occupies residues 1–27; that stretch reads MKNKKRVLIASSLSCAILLLSAATTQA. The interval 28-71 is disordered; the sequence is NSAHKDSQDQNKKEHVDKSQQKEKRNVTNKDKNSTVPDDIGKNG. The span at 30–60 shows a compositional bias: basic and acidic residues; sequence AHKDSQDQNKKEHVDKSQQKEKRNVTNKDKN.

It belongs to the aerolysin family.

This is an uncharacterized protein from Staphylococcus aureus (strain MSSA476).